The primary structure comprises 301 residues: Oxygen-dependent coproporphyrinogen-III oxidase (301 aa).

A substrate-binding site is contributed by serine 90. Residues histidine 94 and histidine 104 each contribute to the a divalent metal cation site. The active-site Proton donor is the histidine 104. Residue 106–108 (NVR) participates in substrate binding. 2 residues coordinate a divalent metal cation: histidine 143 and histidine 173. Residues 238-273 (YVEFNLVWDRGTLFGLQSGGRTESILMSLPPIVKWR) are important for dimerization. 256-258 (GGR) contacts substrate.

The protein belongs to the aerobic coproporphyrinogen-III oxidase family. Homodimer. Requires a divalent metal cation as cofactor.

Its subcellular location is the cytoplasm. It catalyses the reaction coproporphyrinogen III + O2 + 2 H(+) = protoporphyrinogen IX + 2 CO2 + 2 H2O. It participates in porphyrin-containing compound metabolism; protoporphyrin-IX biosynthesis; protoporphyrinogen-IX from coproporphyrinogen-III (O2 route): step 1/1. Functionally, involved in the heme biosynthesis. Catalyzes the aerobic oxidative decarboxylation of propionate groups of rings A and B of coproporphyrinogen-III to yield the vinyl groups in protoporphyrinogen-IX. This Nitrosomonas eutropha (strain DSM 101675 / C91 / Nm57) protein is Oxygen-dependent coproporphyrinogen-III oxidase.